The chain runs to 123 residues: Alpha-ketoglutarate dehydrogenase subunit 4, mitochondrial (123 aa).

The transit peptide at 1–8 directs the protein to the mitochondrion; the sequence is MIATPIRL.

This sequence belongs to the alpha-ketoglutarate dehydrogenase component 4 family. As to quaternary structure, component of the 2-oxoglutarate dehydrogenase complex (OGDC), also called alpha-ketoglutarate dehydrogenase (KGDH) complex. The copmplex is composed of the catalytic subunits OGDH (2-oxoglutarate dehydrogenase KGD1; also called E1 subunit), DLST (dihydrolipoamide succinyltransferase KGD2; also called E2 subunit) and DLD (dihydrolipoamide dehydrogenase LPD1; also called E3 subunit), and the assembly factor KGD4. Within OGDC, interacts (via N-terminus) with E3 subunit and (via C-terminus) with the complex core formed by E1 and E2 subunits.

The protein resides in the mitochondrion. In terms of biological role, molecular adapter that is necessary to a form a stable 2-oxoglutarate dehydrogenase enzyme complex (OGDC). Required for incorporation of the E3 subunit (LPD1) into the E1-E2 core (KGD1-KGD2) of mitochondrial OGDC, and acting as a stability factor for the fully assembled complex. In Saccharomyces cerevisiae (strain ATCC 204508 / S288c) (Baker's yeast), this protein is Alpha-ketoglutarate dehydrogenase subunit 4, mitochondrial.